The following is an 87-amino-acid chain: Sec-independent protein translocase protein TatA (87 aa).

Residues 1–21 (MGSFSITHWLILLVVVVVVFG) traverse the membrane as a helical segment. Positions 56-87 (VLDHDAGTNPPNITGTQSDTTSANKVDDTHNV) are disordered. Polar residues predominate over residues 64 to 79 (NPPNITGTQSDTTSAN).

This sequence belongs to the TatA/E family. In terms of assembly, the Tat system comprises two distinct complexes: a TatABC complex, containing multiple copies of TatA, TatB and TatC subunits, and a separate TatA complex, containing only TatA subunits. Substrates initially bind to the TatABC complex, which probably triggers association of the separate TatA complex to form the active translocon.

The protein localises to the cell inner membrane. In terms of biological role, part of the twin-arginine translocation (Tat) system that transports large folded proteins containing a characteristic twin-arginine motif in their signal peptide across membranes. TatA could form the protein-conducting channel of the Tat system. The sequence is that of Sec-independent protein translocase protein TatA from Psychrobacter arcticus (strain DSM 17307 / VKM B-2377 / 273-4).